The sequence spans 207 residues: Ribonuclease HII (207 aa).

The 190-residue stretch at 12-201 folds into the RNase H type-2 domain; it reads DLVAGVDEVG…VRAAWEAREG (190 aa). 3 residues coordinate a divalent metal cation: D18, E19, and D110.

The protein belongs to the RNase HII family. Mn(2+) serves as cofactor. The cofactor is Mg(2+).

The protein resides in the cytoplasm. The catalysed reaction is Endonucleolytic cleavage to 5'-phosphomonoester.. Endonuclease that specifically degrades the RNA of RNA-DNA hybrids. This Pseudomonas putida (strain W619) protein is Ribonuclease HII.